A 352-amino-acid polypeptide reads, in one-letter code: Phosphoribosylformylglycinamidine cyclo-ligase (352 aa).

This sequence belongs to the AIR synthase family.

Its subcellular location is the cytoplasm. The catalysed reaction is 2-formamido-N(1)-(5-O-phospho-beta-D-ribosyl)acetamidine + ATP = 5-amino-1-(5-phospho-beta-D-ribosyl)imidazole + ADP + phosphate + H(+). It functions in the pathway purine metabolism; IMP biosynthesis via de novo pathway; 5-amino-1-(5-phospho-D-ribosyl)imidazole from N(2)-formyl-N(1)-(5-phospho-D-ribosyl)glycinamide: step 2/2. This chain is Phosphoribosylformylglycinamidine cyclo-ligase, found in Ectopseudomonas mendocina (strain ymp) (Pseudomonas mendocina).